An 83-amino-acid chain; its full sequence is U5-theraphotoxin-Hs1a 5 (83 aa).

Positions 1–21 (MKTSMFLTLTGLVLLFVVCYA) are cleaved as a signal peptide. The propeptide occupies 22-49 (SESEEKEFPKELPSSIFAADSDFKVEER). 3 disulfides stabilise this stretch: Cys51/Cys63, Cys56/Cys68, and Cys62/Cys75.

The protein belongs to the neurotoxin 10 (Hwtx-1) family. 51 (Hntx-8) subfamily. Hntx-8 sub-subfamily. As to expression, expressed by the venom gland.

It is found in the secreted. Its function is as follows. Agglutinates erythrocytes. This chain is U5-theraphotoxin-Hs1a 5, found in Cyriopagopus schmidti (Chinese bird spider).